The following is a 24-amino-acid chain: Brevinin-1BYb (24 aa).

The cysteines at positions 18 and 24 are disulfide-linked.

As to expression, expressed by the skin glands.

The protein resides in the secreted. Functionally, antibacterial activity against Gram-positive bacterium S.aureus and Gram-negative bacterium E.coli. Has moderate antifungal activity against C.albicans and strong hemolytic activity. The sequence is that of Brevinin-1BYb from Rana boylii (Foothill yellow-legged frog).